A 52-amino-acid polypeptide reads, in one-letter code: MQMKKCPKCGKYTLKEYCIDCNEKAGTVKPPRFSPVDKYGKYRRMLKKSLKK.

The protein belongs to the NOP10 family.

Involved in ribosome biogenesis; more specifically in 18S rRNA pseudouridylation and in cleavage of pre-rRNA. The polypeptide is Ribosome biogenesis protein Nop10 (Methanococcus vannielii (strain ATCC 35089 / DSM 1224 / JCM 13029 / OCM 148 / SB)).